A 760-amino-acid polypeptide reads, in one-letter code: General transcription and DNA repair factor IIH helicase subunit XPD (760 aa).

Positions 7–283 constitute a Helicase ATP-binding domain; it reads GLLVYFPYDY…KETDEQRLRD (277 aa). 42–49 contacts ATP; that stretch reads MPSGTGKT. [4Fe-4S] cluster contacts are provided by C116, C134, C155, and C190. The short motif at 234–237 is the DEAH box element; that stretch reads DEAH. Residues 438 to 637 form a mediates interaction with MMS19 region; sequence MDASLAIKPV…TQSRILKARL (200 aa). The short motif at 682 to 695 is the Nuclear localization signal element; the sequence is KRFARGDKRGKLPR.

The protein belongs to the helicase family. RAD3/XPD subfamily. As to quaternary structure, component of the 7-subunit TFIIH core complex composed of XPB/ERCC3, XPD/ERCC2, GTF2H1, GTF2H2, GTF2H3, GTF2H4 and GTF2H5, which is active in NER. The core complex associates with the 3-subunit CDK-activating kinase (CAK) module composed of CCNH/cyclin H, CDK7 and MNAT1 to form the 10-subunit holoenzyme (holo-TFIIH) active in transcription. Interacts with GTF2H2 (p44) which stimulates the 5'-3' helicase activity of this subunit. Component of the MMXD complex, which includes CIAO1, ERCC2, CIAO2B, MMS19 and SLC25A5. Interacts with CIAO1 and CIAO2B; the interaction WITH CIAO2B is direct. Interacts with ATF7IP. Interacts directly with MMS19. Part of TBP-based Pol II pre-initiation complex (PIC), in which Pol II core assembles with general transcription factors and other specific initiation factors including GTF2E1, GTF2E2, GTF2F1, GTF2F2, TCEA1, ERCC2, ERCC3, GTF2H2, GTF2H3, GTF2H4, GTF2H5, GTF2A1, GTF2A2, GTF2B and TBP; this large multi-subunit PIC complex mediates DNA unwinding and targets Pol II core to the transcription start site where the first phosphodiester bond forms. (Microbial infection) Interacts with Epstein-Barr virus EBNA2. The cofactor is Mg(2+). [4Fe-4S] cluster serves as cofactor. Post-translationally, ISGylated.

Its subcellular location is the nucleus. It localises to the cytoplasm. It is found in the cytoskeleton. The protein localises to the spindle. It catalyses the reaction Couples ATP hydrolysis with the unwinding of duplex DNA at the replication fork by translocating in the 5'-3' direction. This creates two antiparallel DNA single strands (ssDNA). The leading ssDNA polymer is the template for DNA polymerase III holoenzyme which synthesizes a continuous strand.. The enzyme catalyses ATP + H2O = ADP + phosphate + H(+). With respect to regulation, interaction with GTF2H2 (p44) results in stimulation of the 5'-3' helicase activity of this subunit. DNA unwinding by this subunit in TFIIH is stimulated 4-fold by XPA and 20-fold by ERCC5/XPG. Functionally, ATP-dependent 5'-3' DNA helicase. Component of the general transcription and DNA repair factor IIH (TFIIH) core complex, not absolutely essential for minimal transcription in vitro. Required for transcription-coupled nucleotide excision repair (NER) of damaged DNA; recognizes damaged bases. Sequestered in chromatin on UV-damaged DNA. When complexed to CDK-activating kinase (CAK), involved in transcription by RNA polymerase II. In NER, TFIIH acts by opening DNA around the lesion to allow the excision of the damaged oligonucleotide and its replacement by a new DNA fragment. The ATP-dependent helicase activity of XPD/ERCC2 is required for DNA opening. Involved in DNA lesion verification. In transcription, TFIIH has an essential role in transcription initiation. When the pre-initiation complex (PIC) has been established, TFIIH is required for promoter opening and promoter escape. Phosphorylation of the C-terminal tail (CTD) of the largest subunit of RNA polymerase II by the kinase module CAK controls the initiation of transcription. XPD/ERCC2 acts by forming a bridge between CAK and the core-TFIIH complex. The structure of the TFIIH transcription complex differs from the NER-TFIIH complex; large movements by XPD/ERCC2 and XPB/ERCC3 are stabilized by XPA which allow this subunit to contact ssDNA. Involved in the regulation of vitamin-D receptor activity. As part of the mitotic spindle-associated MMXD complex it plays a role in chromosome segregation. Might have a role in aging process and could play a causative role in the generation of skin cancers. The protein is General transcription and DNA repair factor IIH helicase subunit XPD (ERCC2) of Homo sapiens (Human).